The primary structure comprises 156 residues: Small ribosomal subunit protein uS7 (156 aa).

This sequence belongs to the universal ribosomal protein uS7 family. Part of the 30S ribosomal subunit. Contacts proteins S9 and S11.

Functionally, one of the primary rRNA binding proteins, it binds directly to 16S rRNA where it nucleates assembly of the head domain of the 30S subunit. Is located at the subunit interface close to the decoding center, probably blocks exit of the E-site tRNA. The sequence is that of Small ribosomal subunit protein uS7 from Azotobacter vinelandii (strain DJ / ATCC BAA-1303).